Consider the following 441-residue polypeptide: 3-phosphoshikimate 1-carboxyvinyltransferase (441 aa).

A disordered region spans residues 1–21; the sequence is MSANGPSHPARELKAGGSLSG. 3-phosphoshikimate is bound by residues Lys-29, Ser-30, and Arg-34. Lys-29 contributes to the phosphoenolpyruvate binding site. Residues Gly-103 and Arg-132 each coordinate phosphoenolpyruvate. Residues Ser-177, Gln-179, Asp-328, and Lys-355 each contribute to the 3-phosphoshikimate site. Gln-179 is a phosphoenolpyruvate binding site. Asp-328 (proton acceptor) is an active-site residue. Phosphoenolpyruvate is bound by residues Arg-359 and Arg-401.

Belongs to the EPSP synthase family. As to quaternary structure, monomer.

The protein resides in the cytoplasm. The enzyme catalyses 3-phosphoshikimate + phosphoenolpyruvate = 5-O-(1-carboxyvinyl)-3-phosphoshikimate + phosphate. Its pathway is metabolic intermediate biosynthesis; chorismate biosynthesis; chorismate from D-erythrose 4-phosphate and phosphoenolpyruvate: step 6/7. Its function is as follows. Catalyzes the transfer of the enolpyruvyl moiety of phosphoenolpyruvate (PEP) to the 5-hydroxyl of shikimate-3-phosphate (S3P) to produce enolpyruvyl shikimate-3-phosphate and inorganic phosphate. In Parasynechococcus marenigrum (strain WH8102), this protein is 3-phosphoshikimate 1-carboxyvinyltransferase.